Reading from the N-terminus, the 770-residue chain is Amyloid-beta precursor protein (770 aa).

The first 17 residues, 1 to 17, serve as a signal peptide directing secretion; it reads MLPGLALLLLAAWTARA. Over 18 to 701 the chain is Extracellular; it reads LEVPTDGNAG…AEDVGSNKGA (684 aa). The GFLD subdomain stretch occupies residues 28 to 123; that stretch reads LLAEPQIAMF…PYRCLVGEFV (96 aa). The E1 domain occupies 28–189; it reads LLAEPQIAMF…RGVEFVCCPL (162 aa). Disulfide bonds link Cys-38-Cys-62, Cys-73-Cys-117, Cys-98-Cys-105, Cys-133-Cys-187, Cys-144-Cys-174, and Cys-158-Cys-186. 96–110 is a heparin binding site; that stretch reads NWCKRGRKQCKTHPH. The tract at residues 131 to 189 is cuBD subdomain; that stretch reads DKCKFLHQERMDVCETHLHWHTVAKETCSEKSTNLHDYGMLLPCGIDKFRGVEFVCCPL. 3 residues coordinate Cu(2+): His-147, His-151, and Tyr-168. The tract at residues 181-188 is zinc-binding; it reads GVEFVCCP. Glu-183, Cys-186, and Cys-187 together coordinate Zn(2+). Over residues 194 to 207 the composition is skewed to acidic residues; the sequence is DNVDSADAEEDDSD. Positions 194-284 are disordered; that stretch reads DNVDSADAEE…TTTTTTESVE (91 aa). Ser-198 carries the phosphoserine; by CK2 modification. Ser-206 is modified (phosphoserine; by CK1). Tyr-217 and Tyr-262 each carry sulfotyrosine. The segment covering 228-264 has biased composition (acidic residues); sequence VAEEEEVAEVEEEEADDDEDDEDGDEVEEEAEEPYEE. A compositionally biased stretch (low complexity) spans 268–281; sequence RTTSIATTTTTTTE. Intrachain disulfides connect Cys-291–Cys-341, Cys-300–Cys-324, and Cys-316–Cys-337. A BPTI/Kunitz inhibitor domain is found at 291 to 341; the sequence is CSEQAETGPCRAMISRWYFDVTEGKCAPFFYGGCGGNRNNFDTEEYCMAVC. Tyr-336 is subject to Sulfotyrosine. The short motif at 344-365 is the OX-2 element; it reads VMSQSLLKTTQEPLARDPVKLP. The region spanning 374–565 is the E2 domain; sequence AVDKYLETPG…EEIQDEVDEL (192 aa). The interval 391 to 423 is heparin-binding; sequence FQKAKERLEAKHRERMSQVMREWEEAERQAKNL. A Phosphoserine modification is found at Ser-441. Residues 491–522 are heparin-binding; that stretch reads FNMLKKYVRAEQKDRQHTLKHFEHVRMVDPKK. Position 497 is a phosphotyrosine (Tyr-497). The tract at residues 523-540 is collagen-binding; that stretch reads AAQIRSQVMTHLRVIYER. Asn-542 and Asn-571 each carry an N-linked (GlcNAc...) asparagine glycan. His-677, Tyr-681, His-684, and His-685 together coordinate Cu(2+). Zn(2+) contacts are provided by His-677, Tyr-681, His-684, and His-685. Residues 695-722 form an interaction with PSEN1 region; sequence VGSNKGAIIGLMVGGVVIATVIVITLVM. Residues 702-722 form a helical membrane-spanning segment; sequence IIGLMVGGVVIATVIVITLVM. The Cytoplasmic portion of the chain corresponds to 723-770; sequence LKKKQYTSIHHGVVEVDAAVTPEERHLSKMQQNGYENPTYKFFEQMQN. Residues 724 to 734 carry the Basolateral sorting signal motif; the sequence is KKKQYTSIHHG. Thr-729 is modified (phosphothreonine). A Phosphoserine; by APP-kinase I modification is found at Ser-730. The interaction with G(o)-alpha stretch occupies residues 732–751; sequence HHGVVEVDAAVTPEERHLSK. The residue at position 743 (Thr-743) is a Phosphothreonine; by CDK5 and MAPK10. The required for the interaction with KIF5B and for anterograde transport in axons stretch occupies residues 756–770; that stretch reads GYENPTYKFFEQMQN. Position 757 is a phosphotyrosine; by ABL1 (Tyr-757). The YENPXY motif; contains endocytosis signal motif lies at 757-762; sequence YENPTY. Lys-763 participates in a covalent cross-link: Glycyl lysine isopeptide (Lys-Gly) (interchain with G-Cter in ubiquitin).

It belongs to the APP family. As to quaternary structure, binds, via its C-terminus, to the PID domain of several cytoplasmic proteins, including APBB family members, the APBA family, MAPK8IP1, SHC1 and NUMB and DAB1. Binding to DAB1 inhibits its serine phosphorylation. Interacts (via NPXY motif) with DAB2 (via PID domain); the interaction is impaired by tyrosine phosphorylation of the NPXY motif. Also interacts with GPCR-like protein BPP, APPBP1, IB1, KNS2 (via its TPR domains), APPBP2 (via BaSS) and DDB1. In vitro, it binds MAPT via the MT-binding domains. Associates with microtubules in the presence of ATP and in a kinesin-dependent manner. Interacts, through a C-terminal domain, with GNAO1. Amyloid-beta protein 42 binds CHRNA7 in hippocampal neurons. Amyloid-beta associates with HADH2. Interacts with CPEB1, ANKS1B and AGER. Interacts with ITM2B. Interacts with ITM2C. Interacts with IDE. Can form homodimers; dimerization is enhanced in the presence of Cu(2+) ions. Can form homodimers; this is promoted by heparin binding. Amyloid-beta protein 40 interacts with S100A9. CTF-alpha product of APP interacts with GSAP. Interacts with SORL1 (via N-terminal ectodomain); this interaction retains APP in the trans-Golgi network and reduces processing into soluble APP-alpha and amyloid-beta peptides. The C99 fragment also interacts with SORL1. Interacts with PLD3. Interacts with VDAC1. Interacts with NSG1; could regulate APP processing. Amyloid-beta protein 42 interacts with FPR2. Interacts (via transmembrane region) with PSEN1; the interaction is direct. Interacts with LRRK2. Interacts (via cytoplasmic domain) with KIF5B. Interacts (via C-terminus) with APBB2/FE65L1 (via C-terminus). Interacts (via intracellular domain) with APBB3. Post-translationally, proteolytically processed under normal cellular conditions. Cleavage either by alpha-secretase, beta-secretase or theta-secretase leads to generation and extracellular release of soluble APP peptides, S-APP-alpha and S-APP-beta, and the retention of corresponding membrane-anchored C-terminal fragments, C80, C83 and C99. Subsequent processing of C80 and C83 by gamma-secretase yields P3 peptides. This is the major secretory pathway and is non-amyloidogenic. Alternatively, presenilin/nicastrin-mediated gamma-secretase processing of C99 releases the amyloid-beta proteins, amyloid-beta protein 40 and amyloid-beta protein 42, major components of amyloid plaques, and the cytotoxic C-terminal fragments, gamma-CTF(50), gamma-CTF(57) and gamma-CTF(59). PSEN1 cleavage is more efficient with C83 than with C99 as substrate (in vitro). Amyloid-beta protein 40 and Amyloid-beta protein 42 are cleaved by ACE. Many other minor amyloid-beta peptides, amyloid-beta 1-X peptides, are found in cerebral spinal fluid (CSF) including the amyloid-beta X-15 peptides, produced from the cleavage by alpha-secretase. Proteolytically cleaved by caspases during neuronal apoptosis. Cleavage at Asp-739 by either caspase-3, -8 or -9 results in the production of the neurotoxic C31 peptide and the increased production of amyloid-beta peptides. In terms of processing, N- and O-glycosylated. Post-translationally, phosphorylation in the C-terminal on tyrosine, threonine and serine residues is neuron-specific. Phosphorylation can affect APP processing, neuronal differentiation and interaction with other proteins. Phosphorylated on Thr-743 in neuronal cells by Cdc5 kinase and Mapk10, in dividing cells by Cdc2 kinase in a cell-cycle dependent manner with maximal levels at the G2/M phase and, in vitro, by GSK-3-beta. The Thr-743 phosphorylated form causes a conformational change which reduces binding of Fe65 family members. In dopaminergic (DA) neurons, phosphorylation on Thr-743 by LRKK2 promotes the production and the nuclear translocation of the APP intracellular domain (AICD) which induces DA neuron apoptosis. Phosphorylation on Tyr-757 is required for SHC binding. Phosphorylated in the extracellular domain by casein kinases on both soluble and membrane-bound APP. This phosphorylation is inhibited by heparin. Trophic-factor deprivation triggers the cleavage of surface APP by beta-secretase to release sAPP-beta which is further cleaved to release an N-terminal fragment of APP (N-APP). In terms of processing, amyloid-beta peptides are degraded by IDE. Post-translationally, sulfated on tyrosine residues.

Its subcellular location is the cell membrane. It localises to the membrane. It is found in the perikaryon. The protein resides in the cell projection. The protein localises to the growth cone. Its subcellular location is the clathrin-coated pit. It localises to the early endosome. It is found in the cytoplasmic vesicle. The protein resides in the endoplasmic reticulum. The protein localises to the golgi apparatus. Its subcellular location is the secreted. It localises to the cell surface. It is found in the nucleus. The protein resides in the cytoplasm. Its function is as follows. Functions as a cell surface receptor and performs physiological functions on the surface of neurons relevant to neurite growth, neuronal adhesion and axonogenesis. Interaction between APP molecules on neighboring cells promotes synaptogenesis. Involved in cell mobility and transcription regulation through protein-protein interactions. Can promote transcription activation through binding to APBB1-KAT5 and inhibit Notch signaling through interaction with Numb. Couples to apoptosis-inducing pathways such as those mediated by G(o) and JIP. Inhibits G(o)-alpha ATPase activity. Acts as a kinesin I membrane receptor, mediating the axonal transport of beta-secretase and presenilin 1. By acting as a kinesin I membrane receptor, plays a role in axonal anterograde transport of cargo towards synapses in axons. May be involved in copper homeostasis/oxidative stress through copper ion reduction. In vitro, copper-metallated APP induces neuronal death directly or is potentiated through Cu(2+)-mediated low-density lipoprotein oxidation. Can regulate neurite outgrowth through binding to components of the extracellular matrix such as heparin and collagen I and IV. Induces a AGER-dependent pathway that involves activation of p38 MAPK, resulting in internalization of amyloid-beta peptide and mitochondrial dysfunction in cultured cortical neurons. Provides Cu(2+) ions for GPC1 which are required for release of nitric oxide (NO) and subsequent degradation of the heparan sulfate chains on GPC1. Amyloid-beta peptides are lipophilic metal chelators with metal-reducing activity. Binds transient metals such as copper, zinc and iron. In terms of biological role, the gamma-CTF peptides as well as the caspase-cleaved peptides, including C31, are potent enhancers of neuronal apoptosis. The sequence is that of Amyloid-beta precursor protein from Pan troglodytes (Chimpanzee).